We begin with the raw amino-acid sequence, 135 residues long: UPF0299 membrane protein Spro_1570 (135 aa).

The next 4 helical transmembrane spans lie at 4-24, 30-50, 63-83, and 93-113; these read LFTL…CLFA, ALLP…FALL, GCHL…VGVM, and LGPL…VVGY.

Belongs to the UPF0299 family.

It is found in the cell inner membrane. The polypeptide is UPF0299 membrane protein Spro_1570 (Serratia proteamaculans (strain 568)).